An 892-amino-acid chain; its full sequence is Alanine--tRNA ligase (892 aa).

Zn(2+)-binding residues include histidine 594, histidine 598, cysteine 702, and histidine 706.

Belongs to the class-II aminoacyl-tRNA synthetase family. The cofactor is Zn(2+).

It localises to the cytoplasm. It catalyses the reaction tRNA(Ala) + L-alanine + ATP = L-alanyl-tRNA(Ala) + AMP + diphosphate. Its function is as follows. Catalyzes the attachment of alanine to tRNA(Ala) in a two-step reaction: alanine is first activated by ATP to form Ala-AMP and then transferred to the acceptor end of tRNA(Ala). Also edits incorrectly charged Ser-tRNA(Ala) and Gly-tRNA(Ala) via its editing domain. The sequence is that of Alanine--tRNA ligase from Pyrobaculum neutrophilum (strain DSM 2338 / JCM 9278 / NBRC 100436 / V24Sta) (Thermoproteus neutrophilus).